The primary structure comprises 382 residues: Lipid-A-disaccharide synthase (382 aa).

It belongs to the LpxB family.

It carries out the reaction 2-N,3-O-bis[(3R)-3-hydroxytetradecanoyl]-alpha-D-glucosaminyl 1-phosphate + UDP-2-N,3-O-bis[(3R)-3-hydroxytetradecanoyl]-alpha-D-glucosamine = lipid A disaccharide (E. coli) + UDP + H(+). The catalysed reaction is a lipid X + a UDP-2-N,3-O-bis[(3R)-3-hydroxyacyl]-alpha-D-glucosamine = a lipid A disaccharide + UDP + H(+). It participates in glycolipid biosynthesis; lipid IV(A) biosynthesis; lipid IV(A) from (3R)-3-hydroxytetradecanoyl-[acyl-carrier-protein] and UDP-N-acetyl-alpha-D-glucosamine: step 5/6. In terms of biological role, condensation of UDP-2,3-diacylglucosamine and 2,3-diacylglucosamine-1-phosphate to form lipid A disaccharide, a precursor of lipid A, a phosphorylated glycolipid that anchors the lipopolysaccharide to the outer membrane of the cell. The chain is Lipid-A-disaccharide synthase from Sodalis glossinidius (strain morsitans).